Reading from the N-terminus, the 681-residue chain is Methionine--tRNA ligase (681 aa).

A 'HIGH' region motif is present at residues 14–24 (PYANGSIHLGH). Zn(2+) is bound by residues Cys145, Cys148, Cys158, and Cys161. Positions 331-335 (KMSKS) match the 'KMSKS' region motif. Lys334 is an ATP binding site. In terms of domain architecture, tRNA-binding spans 579–681 (TFAAVDLRVA…SGAKPGQRIK (103 aa)).

This sequence belongs to the class-I aminoacyl-tRNA synthetase family. MetG type 1 subfamily. In terms of assembly, homodimer. It depends on Zn(2+) as a cofactor.

Its subcellular location is the cytoplasm. The enzyme catalyses tRNA(Met) + L-methionine + ATP = L-methionyl-tRNA(Met) + AMP + diphosphate. Functionally, is required not only for elongation of protein synthesis but also for the initiation of all mRNA translation through initiator tRNA(fMet) aminoacylation. The protein is Methionine--tRNA ligase of Pseudomonas putida (strain W619).